The sequence spans 54 residues: Large ribosomal subunit protein bL33A (54 aa).

Belongs to the bacterial ribosomal protein bL33 family.

In Mycolicibacterium paratuberculosis (strain ATCC BAA-968 / K-10) (Mycobacterium paratuberculosis), this protein is Large ribosomal subunit protein bL33A.